Here is a 543-residue protein sequence, read N- to C-terminus: Efflux pump mokI (543 aa).

The next 13 helical transmembrane spans lie at 30-50 (LVVTSVTLVVFLMLLDMSIIV), 90-110 (LLTLKYTFLAFLGVFEVGSAL), 125-145 (AVAGMGGSGLTNGAITILASA), 153-173 (LLIGIMMGLSQIAIVCGPLLG), 185-205 (CFYINLPVGALAAILLLAIHI), 233-253 (LLGFVLFAAFAVMISLALEWG), 261-281 (SSVIIGLFCGAGISLVVFGFW), 307-327 (LFLGFFSGALLTFSYYLPIYF), 340-360 (VYMLPGIGGQIVMAIVSGAII), 364-384 (GYYIPWALASGIIVSISAGLV), 394-416 (AAWVMYQFMGGFGRGCGMQTPII), 428-448 (ALGISLAMFGQTFGGSLFLTL), and 509-529 (VGASGATFLFAWGMGQVGLIW).

Belongs to the major facilitator superfamily. TCR/Tet family.

The protein localises to the membrane. Its function is as follows. Efflux pump; part of the gene cluster that mediates the biosynthesis of monakolin K, also known as lovastatin, and which acts as a potent competitive inhibitor of HMG-CoA reductase. In Monascus pilosus (Red mold), this protein is Efflux pump mokI.